Here is a 209-residue protein sequence, read N- to C-terminus: Thymidylate kinase (209 aa).

Residue 10–17 coordinates ATP; it reads GLDGAGKS.

The protein belongs to the thymidylate kinase family.

The catalysed reaction is dTMP + ATP = dTDP + ADP. Functionally, phosphorylation of dTMP to form dTDP in both de novo and salvage pathways of dTTP synthesis. This Francisella tularensis subsp. holarctica (strain FTNF002-00 / FTA) protein is Thymidylate kinase.